A 334-amino-acid chain; its full sequence is MATATSHQSVVSFASLRSSPSSTISQCGFKIDSSLSFTSKKTNFCKIKAMASSVSYDNTLLSPSKTIPDNSQKKSNEAALILIRHGESLWNEKNLFTGCVDVPLTEKGVEEAIEAGKRISNIPVDVIFTSSLIRAQMTAMLAMIQHRRKKVPIILHDESEQAKTWSQVFSDETKNQSIPVIPAWQLNERMYGELQGLNKQETAERYGKEQVHEWRRSYDIPPPKGESLEMCAERAVAYFQDNIEPKLAAGKNVMIAAHGNSLRSIIMYLDKLTCQEVISLELSTGIPLLYIFKEGKFMKRGSPVGPTEAGVYAYTKRLAQYRQKLEDDSEVLCA.

The transit peptide at 1-48 directs the protein to the chloroplast; that stretch reads MATATSHQSVVSFASLRSSPSSTISQCGFKIDSSLSFTSKKTNFCKIK. Residues 84 to 91, 97 to 98, arginine 134, 188 to 191, lysine 199, 215 to 216, and 259 to 260 each bind substrate; these read RHGESLWN, TG, ERMY, RR, and GN. The Tele-phosphohistidine intermediate role is filled by histidine 85. The active-site Proton donor/acceptor is the glutamate 188.

Belongs to the phosphoglycerate mutase family. BPG-dependent PGAM subfamily.

The protein resides in the plastid. It is found in the chloroplast. It carries out the reaction (2R)-2-phosphoglycerate = (2R)-3-phosphoglycerate. It participates in carbohydrate degradation; glycolysis; pyruvate from D-glyceraldehyde 3-phosphate: step 3/5. In terms of biological role, catalyzes the interconversion of 2-phosphoglycerate and 3-phosphoglycerate. The protein is 2,3-bisphosphoglycerate-dependent phosphoglycerate mutase 1 of Arabidopsis thaliana (Mouse-ear cress).